The sequence spans 57 residues: Small ribosomal subunit protein bS21 (57 aa).

Residues serine 24–phenylalanine 57 are disordered. The span at glutamate 31 to serine 42 shows a compositional bias: basic and acidic residues. Positions valine 43–phenylalanine 57 are enriched in basic residues.

Belongs to the bacterial ribosomal protein bS21 family.

This Listeria innocua serovar 6a (strain ATCC BAA-680 / CLIP 11262) protein is Small ribosomal subunit protein bS21 (rpsU).